The sequence spans 139 residues: Large ribosomal subunit protein uL16c (139 aa).

The span at 1-17 (MLSPKKTKFRKQHRGRM) shows a compositional bias: basic residues. The tract at residues 1 to 23 (MLSPKKTKFRKQHRGRMKGSASK) is disordered.

The protein belongs to the universal ribosomal protein uL16 family. As to quaternary structure, part of the 50S ribosomal subunit.

Its subcellular location is the plastid. The protein localises to the chloroplast. The protein is Large ribosomal subunit protein uL16c of Pyropia yezoensis (Susabi-nori).